Reading from the N-terminus, the 257-residue chain is Zinc transporter ZupT (257 aa).

A run of 3 helical transmembrane segments spans residues 5 to 25 (LILT…GVLG), 32 to 52 (LLAF…LMEM), and 61 to 81 (GMSP…YFGL). Positions 120 and 123 each coordinate Fe(2+). Positions 123 and 148 each coordinate Zn(2+). Helical transmembrane passes span 137-157 (LGFG…LAVA), 171-191 (ILWA…AWLI), 195-215 (MISP…MVAL), and 236-256 (GVLC…TVGI). Residues N149, E152, and E181 each coordinate Fe(2+). E152 is a binding site for Zn(2+).

This sequence belongs to the ZIP transporter (TC 2.A.5) family. ZupT subfamily.

The protein localises to the cell inner membrane. It carries out the reaction Zn(2+)(in) = Zn(2+)(out). In terms of biological role, mediates zinc uptake. May also transport other divalent cations. The protein is Zinc transporter ZupT of Escherichia coli O81 (strain ED1a).